Here is a 147-residue protein sequence, read N- to C-terminus: Hemoglobin subunit epsilon (147 aa).

One can recognise a Globin domain in the interval 3–147 (HFTAEEKAII…VATALAHKYH (145 aa)). Phosphoserine occurs at positions 14 and 51. Heme b is bound by residues H64 and H93.

Belongs to the globin family. Heterotetramer of two alpha chains and two epsilon chains in early embryonic hemoglobin Gower-2; two zeta chains and two epsilon chains in early embryonic hemoglobin Gower-1. In terms of tissue distribution, red blood cells.

Functionally, the epsilon chain is a beta-type chain of early mammalian embryonic hemoglobin. In Otolemur crassicaudatus (Brown greater galago), this protein is Hemoglobin subunit epsilon (HBE1).